The chain runs to 34 residues: Sarcoplasmic/endoplasmic reticulum calcium ATPase regulator DWORF (34 aa).

Residues 12 to 32 form a helical membrane-spanning segment; sequence IVPILLLVGWIVGCIIVIYIV.

Homooligomer. Can also form heterooligomers with other sarcoplasmic/endoplasmic reticulum calcium ATPase (SERCA) regulators ARLN, ERLN, PLN and SLN. Monomer. Interacts with ATP2A1/SERCA1; the interaction results in activation of ATP2A1. Interacts as a monomer with ATP2A2/SERCA2; the interaction results in activation of ATP2A2. In terms of tissue distribution, highly expressed in heart (at protein level). Detected in heart and soleus, a postural muscle group of the hindlimb containing the highest enrichment of slow-twitch muscle fibers. Also expressed in diaphragm, which contains some slow-twitch fibers. Not detected in the quadriceps, a fast-twitch muscle group, or in cardiac atrial muscle. Not expressed in the prenatal heart but gradually increases in abundance postnatally.

It is found in the sarcoplasmic reticulum membrane. In terms of biological role, enhances the activity of ATP2A1/SERCA1 ATPase in sarcoplasmic reticulum by displacing ATP2A1/SERCA1 inhibitors, thereby acting as a key regulator of skeletal muscle activity. Also enhances the activity of the ATP2A2/SERCA2 ATPase. Does not directly stimulate SERCA pump activity. Binds preferentially to the phosphorylated E1 and E2 conformational forms of ATP2A2 which predominate at high Ca(2+) concentrations during the systolic phase of the cardiac cycle. Competes with ATP2A2 inhibitor phospholamban (PLN) for binding to ATP2A2 and displaces PLN. Can activate ATP2A2 directly in the absence of PLN. Also enhances sarcoplasmic reticulum Ca(2+) uptake and myocyte contractility by displacing the SERCA inhibitory peptides sarcolipin (SLN) and myoregulin (MRLN). This chain is Sarcoplasmic/endoplasmic reticulum calcium ATPase regulator DWORF, found in Mus musculus (Mouse).